Consider the following 144-residue polypeptide: Aklanonic acid methyl ester cyclase AcmA (144 aa).

Positions 51 and 105 each coordinate substrate.

The protein belongs to the polyketide cyclase DnrD family. As to quaternary structure, homotetramer.

It catalyses the reaction methyl aklanonate = aklaviketone. Its pathway is antibiotic biosynthesis; daunorubicin biosynthesis. It participates in antibiotic biosynthesis; carminomycin biosynthesis. The protein operates within antibiotic biosynthesis; rhodomycin biosynthesis. It functions in the pathway antibiotic biosynthesis; aclacinomycin biosynthesis. Its function is as follows. Involved in the biosynthesis of aklavinone which is an important precursor common to the formation of the clinically significant anthracyclines such as carminomycin, daunorubicin (daunomycin), rhodomycin, aclacinomycin T (aklavin) and aclacinomycin A (aclarubicin). These compounds are aromatic polyketide antibiotics that exhibit high cytotoxicity and are widely applied in the chemotherapy of a variety of cancers. Catalyzes the cyclization of aklanonic acid methyl ester to yield aklaviketone. It is also able to use nogalonic acid methyl ester as substrate, but produces exclusively auraviketone with C9-R stereochemistry. This is Aklanonic acid methyl ester cyclase AcmA (acma) from Streptomyces galilaeus.